Here is a 301-residue protein sequence, read N- to C-terminus: Probable 5-dehydro-4-deoxyglucarate dehydratase (301 aa).

It belongs to the DapA family.

It carries out the reaction 5-dehydro-4-deoxy-D-glucarate + H(+) = 2,5-dioxopentanoate + CO2 + H2O. It participates in carbohydrate acid metabolism; D-glucarate degradation; 2,5-dioxopentanoate from D-glucarate: step 2/2. The polypeptide is Probable 5-dehydro-4-deoxyglucarate dehydratase (Cereibacter sphaeroides (strain ATCC 17023 / DSM 158 / JCM 6121 / CCUG 31486 / LMG 2827 / NBRC 12203 / NCIMB 8253 / ATH 2.4.1.) (Rhodobacter sphaeroides)).